The chain runs to 190 residues: Translation initiation factor IF-3 (190 aa).

The protein belongs to the IF-3 family. As to quaternary structure, monomer.

Its subcellular location is the cytoplasm. Its function is as follows. IF-3 binds to the 30S ribosomal subunit and shifts the equilibrium between 70S ribosomes and their 50S and 30S subunits in favor of the free subunits, thus enhancing the availability of 30S subunits on which protein synthesis initiation begins. The chain is Translation initiation factor IF-3 from Prochlorococcus marinus (strain MIT 9312).